The following is a 450-amino-acid chain: C4-dicarboxylate transport protein (450 aa).

Helical transmembrane passes span 25–45, 56–76, 90–110, 162–182, 200–220, 234–254, 319–339, and 367–387; these read VVFA…YGAA, LIKM…IASM, MAYF…VANV, ILQV…VGDA, LVNI…AFTI, LVLT…GAVA, IYMT…LTLG, and AATL…ILGV.

The protein belongs to the dicarboxylate/amino acid:cation symporter (DAACS) (TC 2.A.23) family.

It localises to the cell inner membrane. Functionally, responsible for the transport of dicarboxylates such as succinate, fumarate, and malate from the periplasm across the membrane. The chain is C4-dicarboxylate transport protein from Acidovorax sp. (strain JS42).